A 436-amino-acid chain; its full sequence is Enolase (436 aa).

Glutamine 163 serves as a coordination point for (2R)-2-phosphoglycerate. Residue glutamate 205 is the Proton donor of the active site. Mg(2+) is bound by residues aspartate 242, glutamate 285, and aspartate 312. Lysine 337, arginine 366, serine 367, and lysine 388 together coordinate (2R)-2-phosphoglycerate. The Proton acceptor role is filled by lysine 337.

It belongs to the enolase family. Requires Mg(2+) as cofactor.

It localises to the cytoplasm. It is found in the secreted. The protein localises to the cell surface. The catalysed reaction is (2R)-2-phosphoglycerate = phosphoenolpyruvate + H2O. It participates in carbohydrate degradation; glycolysis; pyruvate from D-glyceraldehyde 3-phosphate: step 4/5. In terms of biological role, catalyzes the reversible conversion of 2-phosphoglycerate (2-PG) into phosphoenolpyruvate (PEP). It is essential for the degradation of carbohydrates via glycolysis. This is Enolase from Solidesulfovibrio magneticus (strain ATCC 700980 / DSM 13731 / RS-1) (Desulfovibrio magneticus).